A 454-amino-acid chain; its full sequence is Bifunctional protein GlmU (454 aa).

Residues 1–232 (MTDRTCLSIV…VDNVIGINNR (232 aa)) are pyrophosphorylase. UDP-N-acetyl-alpha-D-glucosamine is bound by residues 11–14 (LAAG), Lys-25, Gln-78, and 83–84 (GT). A Mg(2+)-binding site is contributed by Asp-108. Residues Gly-144, Glu-158, Asn-173, and Asn-230 each coordinate UDP-N-acetyl-alpha-D-glucosamine. Position 230 (Asn-230) interacts with Mg(2+). The segment at 233 to 253 (AELAEAETIWQNRKRRELMLS) is linker. The segment at 254 to 454 (GVTLIAPETV…AIKAAKSVSK (201 aa)) is N-acetyltransferase. 2 residues coordinate UDP-N-acetyl-alpha-D-glucosamine: Arg-319 and Lys-337. The active-site Proton acceptor is His-349. The UDP-N-acetyl-alpha-D-glucosamine site is built by Tyr-352 and Asn-363. Acetyl-CoA contacts are provided by residues Ala-366, 372–373 (NY), Ser-391, Ser-409, and Arg-426.

This sequence in the N-terminal section; belongs to the N-acetylglucosamine-1-phosphate uridyltransferase family. In the C-terminal section; belongs to the transferase hexapeptide repeat family. Homotrimer. Requires Mg(2+) as cofactor.

It is found in the cytoplasm. The catalysed reaction is alpha-D-glucosamine 1-phosphate + acetyl-CoA = N-acetyl-alpha-D-glucosamine 1-phosphate + CoA + H(+). It carries out the reaction N-acetyl-alpha-D-glucosamine 1-phosphate + UTP + H(+) = UDP-N-acetyl-alpha-D-glucosamine + diphosphate. It participates in nucleotide-sugar biosynthesis; UDP-N-acetyl-alpha-D-glucosamine biosynthesis; N-acetyl-alpha-D-glucosamine 1-phosphate from alpha-D-glucosamine 6-phosphate (route II): step 2/2. Its pathway is nucleotide-sugar biosynthesis; UDP-N-acetyl-alpha-D-glucosamine biosynthesis; UDP-N-acetyl-alpha-D-glucosamine from N-acetyl-alpha-D-glucosamine 1-phosphate: step 1/1. The protein operates within bacterial outer membrane biogenesis; LPS lipid A biosynthesis. In terms of biological role, catalyzes the last two sequential reactions in the de novo biosynthetic pathway for UDP-N-acetylglucosamine (UDP-GlcNAc). The C-terminal domain catalyzes the transfer of acetyl group from acetyl coenzyme A to glucosamine-1-phosphate (GlcN-1-P) to produce N-acetylglucosamine-1-phosphate (GlcNAc-1-P), which is converted into UDP-GlcNAc by the transfer of uridine 5-monophosphate (from uridine 5-triphosphate), a reaction catalyzed by the N-terminal domain. This Brucella canis (strain ATCC 23365 / NCTC 10854 / RM-666) protein is Bifunctional protein GlmU.